A 161-amino-acid chain; its full sequence is Anthrone oxygenase tpcL (161 aa).

An N-linked (GlcNAc...) asparagine glycan is attached at Asn4. 4 helical membrane passes run 15-35 (VITG…DIPV), 56-74 (IGHK…LYGY), 87-107 (LPHI…WLVM), and 136-155 (WAQL…VLGL).

Belongs to the anthrone oxygenase family. Specifically expressed in conidia.

Its subcellular location is the membrane. The enzyme catalyses emodin anthrone + O2 = emodin + H2O + H(+). Its pathway is secondary metabolite biosynthesis. Functionally, anthrone oxygenase; part of the gene cluster that mediates the biosynthesis of trypacidin, a mycotoxin with antiprotozoal activity and that plays a role in the infection process. The pathway begins with the synthesis of atrochrysone thioester by the polyketide synthase (PKS) tpcC. The atrochrysone carboxyl ACP thioesterase tpcB then breaks the thioester bond and releases the atrochrysone carboxylic acid from tpcC. The decarboxylase tpcK converts atrochrysone carboxylic acid to atrochrysone which is further reduced into emodin anthrone. The next step is performed by the emodin anthrone oxygenase tpcL that catalyzes the oxidation of emodinanthrone to emodin. Emodin O-methyltransferase encoded by tpcA catalyzes methylation of the 8-hydroxy group of emodin to form questin. Ring cleavage of questin by questin oxidase tpcI leads to desmethylsulochrin via several intermediates including questin epoxide. Another methylation step catalyzed by tpcM leads to the formation of sulochrin which is further converted to monomethylsulfochrin by tpcH. Finally, the tpcJ catalyzes the conversion of monomethylsulfochrin to trypacidin. Trypacidin is toxic for human pulmonary and bronchial epithelial cells by initiating the intracellular formation of nitric oxide (NO) and hydrogen peroxide (H(2)O(2)), thus triggering host necrotic cell death. The trypacidin pathway is also able to produce endocrocin via a distinct route from the endocrocin Enc pathway. In Aspergillus fumigatus (strain ATCC MYA-4609 / CBS 101355 / FGSC A1100 / Af293) (Neosartorya fumigata), this protein is Anthrone oxygenase tpcL.